The sequence spans 1082 residues: Neisserial autotransporter lipoprotein NalP (1082 aa).

An N-terminal signal peptide occupies residues 1–27; it reads MRTTPTFPTKTFKPTAMALAVATTLSA. A lipid anchor (N-palmitoyl cysteine) is attached at cysteine 28. The S-diacylglycerol cysteine moiety is linked to residue cysteine 28. The 373-residue stretch at 110–482 folds into the Peptidase S8 domain; the sequence is NDAYKNLINL…WGLLDAGKAM (373 aa). Active-site charge relay system residues include aspartate 138, histidine 210, and serine 426. The region spanning 808 to 1082 is the Autotransporter domain; sequence DGLDHNGTGL…SGRVGVGYRF (275 aa).

It belongs to the peptidase S8 family. In terms of processing, probably auto-processes to yield a 68-70 kDa form and a C-terminal 30 kDa translocator domain; upon overexpression in situ and in E.coli full-length protein is seen as well as (probably) auto-processed forms of 68-70 kDa and 30 kDa in size, suggesting this may have protease activity.

The protein resides in the cell outer membrane. The protein localises to the cell surface. Its subcellular location is the secreted. It localises to the host cytoplasm. It is found in the host perinuclear region. Cleavage of host complement factor C3 is inhibited by PMSF. In terms of biological role, major human immunogenic protein, detected in patients recovering from meningitidis. Autotransporter with a secreted protease domain involved in processing other autotransporter proteins including App, IgA, LbpB and NHBA. Probably autoprocesses to release the about 70 kDa passenger domain. Both cell surface protein (Neisserial autotransporter lipoprotein NalP) and the passenger domain cleave human (host) complement factor C3, generating a shorter alpha chain and a longer beta chain than normal. Uptake of a passenger domain fragment (residues 101-784) by human cells increases cell metabolic activity; the serine protease activity is required for this increase. Cleaves human (host) complement factor C3, generating a shorter alpha chain and a longer beta chain than normal. Does not act on mouse or rabbit C3. Cleavage causes C3b degradation by human CFI and CFH, and thus decreases deposition of C3b on the bacteria surface and probably facilitates complement escape. Functionally, plays a role in extracellular-DNA (eDNA) mediated biofilm formation. In some strains (including cc32 strain MC58) eDNA stimulates biofilm formation. When NalP is not expressed (and no longer processes NHBA or IgA) biofilm formation increases. In Neisseria meningitidis serogroup B (strain ATCC BAA-335 / MC58), this protein is Neisserial autotransporter lipoprotein NalP.